The sequence spans 227 residues: ATP synthase F(0) complex subunit a (227 aa).

6 consecutive transmembrane segments (helical) span residues L14–P34, W69–L89, Q98–L118, E132–I152, F180–L200, and L202–Y222.

This sequence belongs to the ATPase A chain family. In terms of assembly, component of the ATP synthase complex composed at least of ATP5F1A/subunit alpha, ATP5F1B/subunit beta, ATP5MC1/subunit c (homooctomer), MT-ATP6/subunit a, MT-ATP8/subunit 8, ATP5ME/subunit e, ATP5MF/subunit f, ATP5MG/subunit g, ATP5MK/subunit k, ATP5MJ/subunit j, ATP5F1C/subunit gamma, ATP5F1D/subunit delta, ATP5F1E/subunit epsilon, ATP5PF/subunit F6, ATP5PB/subunit b, ATP5PD/subunit d, ATP5PO/subunit OSCP. ATP synthase complex consists of a soluble F(1) head domain (subunits alpha(3) and beta(3)) - the catalytic core - and a membrane F(0) domain - the membrane proton channel (subunits c, a, 8, e, f, g, k and j). These two domains are linked by a central stalk (subunits gamma, delta, and epsilon) rotating inside the F1 region and a stationary peripheral stalk (subunits F6, b, d, and OSCP). Interacts with DNAJC30; interaction is direct.

It localises to the mitochondrion inner membrane. The catalysed reaction is H(+)(in) = H(+)(out). Its function is as follows. Subunit a, of the mitochondrial membrane ATP synthase complex (F(1)F(0) ATP synthase or Complex V) that produces ATP from ADP in the presence of a proton gradient across the membrane which is generated by electron transport complexes of the respiratory chain. ATP synthase complex consist of a soluble F(1) head domain - the catalytic core - and a membrane F(1) domain - the membrane proton channel. These two domains are linked by a central stalk rotating inside the F(1) region and a stationary peripheral stalk. During catalysis, ATP synthesis in the catalytic domain of F(1) is coupled via a rotary mechanism of the central stalk subunits to proton translocation. With the subunit c (ATP5MC1), forms the proton-conducting channel in the F(0) domain, that contains two crucial half-channels (inlet and outlet) that facilitate proton movement from the mitochondrial intermembrane space (IMS) into the matrix. Protons are taken up via the inlet half-channel and released through the outlet half-channel, following a Grotthuss mechanism. The protein is ATP synthase F(0) complex subunit a of Tetraodon nigroviridis (Spotted green pufferfish).